Consider the following 29-residue polypeptide: Cytochrome b6-f complex subunit 8 (29 aa).

The helical transmembrane segment at 3–23 (IVGIAWAALMVVFTFSLSLVV) threads the bilayer.

The protein belongs to the PetN family. In terms of assembly, the 4 large subunits of the cytochrome b6-f complex are cytochrome b6, subunit IV (17 kDa polypeptide, PetD), cytochrome f and the Rieske protein, while the 4 small subunits are PetG, PetL, PetM and PetN. The complex functions as a dimer.

Its subcellular location is the plastid. It is found in the chloroplast thylakoid membrane. Functionally, component of the cytochrome b6-f complex, which mediates electron transfer between photosystem II (PSII) and photosystem I (PSI), cyclic electron flow around PSI, and state transitions. This is Cytochrome b6-f complex subunit 8 from Cryptomeria japonica (Japanese cedar).